A 90-amino-acid chain; its full sequence is Albumin-1 (90 aa).

A signal peptide is located at residue alanine 1. 3 disulfides stabilise this stretch: cysteine 4–cysteine 21, cysteine 8–cysteine 23, and cysteine 16–cysteine 34. A propeptide spanning residues leucine 40–isoleucine 47 is cleaved from the precursor.

Post-translationally, the C-terminal glycine may be removed from A1b.

Functionally, A1b binds to basic 7S globulin (BG) and stimulates its phosphorylation activity. The polypeptide is Albumin-1 (LEG) (Phaseolus angularis (Azuki bean)).